We begin with the raw amino-acid sequence, 309 residues long: Sulfate adenylyltransferase subunit 2 (309 aa).

Belongs to the PAPS reductase family. CysD subfamily. Heterodimer composed of CysD, the smaller subunit, and CysN.

It carries out the reaction sulfate + ATP + H(+) = adenosine 5'-phosphosulfate + diphosphate. It participates in sulfur metabolism; hydrogen sulfide biosynthesis; sulfite from sulfate: step 1/3. With CysN forms the ATP sulfurylase (ATPS) that catalyzes the adenylation of sulfate producing adenosine 5'-phosphosulfate (APS) and diphosphate, the first enzymatic step in sulfur assimilation pathway. APS synthesis involves the formation of a high-energy phosphoric-sulfuric acid anhydride bond driven by GTP hydrolysis by CysN coupled to ATP hydrolysis by CysD. This chain is Sulfate adenylyltransferase subunit 2, found in Mycobacterium bovis (strain ATCC BAA-935 / AF2122/97).